A 499-amino-acid polypeptide reads, in one-letter code: Histidine ammonia-lyase (499 aa).

The 5-imidazolinone (Ala-Gly) cross-link spans 142–144; the sequence is ASG. Ser143 is modified (2,3-didehydroalanine (Ser)).

It belongs to the PAL/histidase family. Contains an active site 4-methylidene-imidazol-5-one (MIO), which is formed autocatalytically by cyclization and dehydration of residues Ala-Ser-Gly.

The protein localises to the cytoplasm. The enzyme catalyses L-histidine = trans-urocanate + NH4(+). It participates in amino-acid degradation; L-histidine degradation into L-glutamate; N-formimidoyl-L-glutamate from L-histidine: step 1/3. The protein is Histidine ammonia-lyase of Staphylococcus saprophyticus subsp. saprophyticus (strain ATCC 15305 / DSM 20229 / NCIMB 8711 / NCTC 7292 / S-41).